The chain runs to 276 residues: Sulfur carrier protein FdhD (276 aa).

C118 acts as the Cysteine persulfide intermediate in catalysis.

Belongs to the FdhD family.

It is found in the cytoplasm. Its function is as follows. Required for formate dehydrogenase (FDH) activity. Acts as a sulfur carrier protein that transfers sulfur from IscS to the molybdenum cofactor prior to its insertion into FDH. This chain is Sulfur carrier protein FdhD, found in Mycobacterium bovis (strain ATCC BAA-935 / AF2122/97).